Reading from the N-terminus, the 614-residue chain is Elongation factor 4 (614 aa).

The region spanning Ala10–Val192 is the tr-type G domain. Residues Asp22–Thr27 and Asn139–Asp142 each bind GTP.

Belongs to the TRAFAC class translation factor GTPase superfamily. Classic translation factor GTPase family. LepA subfamily.

Its subcellular location is the cell membrane. The catalysed reaction is GTP + H2O = GDP + phosphate + H(+). Required for accurate and efficient protein synthesis under certain stress conditions. May act as a fidelity factor of the translation reaction, by catalyzing a one-codon backward translocation of tRNAs on improperly translocated ribosomes. Back-translocation proceeds from a post-translocation (POST) complex to a pre-translocation (PRE) complex, thus giving elongation factor G a second chance to translocate the tRNAs correctly. Binds to ribosomes in a GTP-dependent manner. This Thermobifida fusca (strain YX) protein is Elongation factor 4.